The chain runs to 1700 residues: MDGNSLLSVPSNLESSRMYDVLEPQQGRGCGSSGSGPGNSITACKKVLRSNSLLESTDYWLQNQRMPCQIGFVEDKSENCASVCFVNLDVNKDECSTEHLQQKLVNVSPDLPKLISSMNVQQPKENEIVVLSGLASGNLQADFEVSQCPWLPDICLVQCARGNRPNSTNCIIFEINKFLIGLELVQERQLHLETNILKLEDDTNCSLSSIEEDFLTASEHLEEESEVDESRNDYENINVSANVLESKQLKGATQVEWNCNKEKWLYALEDKYINKYPTPLIKTERSPENLTKNTALQSLDPSAKPSQWKREAVGNGRQATHYYHSEAFKGQMEKSQALYIPKDAYFSMMDKDVPSACAVAEQRSNLNPGDHEDTRNALPPRQDGEVTTGKYATNLAESVLQDAFIRLSQSQSTLPQESAVSVSVGSSLLPSCYSTKDTVVSRSWNELPKIVVVQSPDGSDAAPQPGISSWPEMEVSVETSSILSGENSSRQPQSALEVALACAATVIGTISSPQATERLKMEQVVSNFPPGSSGALQTQAPQGLKEPSINEYSFPSALCGMTQVASAVAVCGLGEREEVTCSVAPSGSLPPAAEASEAMPPLCGLASMELGKEAIAKGLLKEAALVLTRPNTYSSIGDFLDSMNRRIMETASKSQTLCSENVVRNELAHTLSNVILRHSIDEVHHKNMIIDPNDNRHSSEILDTLMESTNQLLLDVICFTFKKMSHIVRLGECPAVLSKETIRRRETEPSCQPSDPGASQAWTKATESSSSSPLSNSHNTSLVINNLVDGMYSKQDKGGVRPGLFKNPTLQSQLSRSHRVPDSSTATTSSKEIYLKGIAGEDTKSPHHSENECRASSEGQRSPTVSQSRSGSQEAEESIHPNTQEKYNCATSRINEVQVNLSLLGDDLLLPAQSTLQTKHPDIYCITDFAEELADTVVSMATEIAAICLDNSSGKQPWFCAWKRGSEFLMTPNVPCRSLKRKKESQGSGTAVRKHKPPRLSEIKRKTDEHPELKEKLMNRVVDESMNLEDVPDSVNLFANEVAAKIMNLTEFSMVDGMWQAQGYPRNRLLSGDRWSRLKASSCESIPEEDSEARAYVNSLGLMSTLSQPVSRASSVSKQSSCESITDEFSRFMVNQMENEGRGFELLLDYYAGKNASSILNSAMQQACRKSDHLSVRPSCPSKQSSTESITEEFYRYMLRDIERDSRESASSRRSSQDWTAGLLSPSLRSPVCHRQSSMPDSRSPCSRLTVNVPIKANSLDGFAQNCPQDFLSVQPVSSASSSGLCKSDSCLYRRGGTDHITNMLIHETWASSIEALMRKNKIIVDDAEEADTEPVSGGSPSQAEKCANRLAASRMCSGPTLLVQESLDCPRKDSVTECKQPPVSSLSKTASLTNHSPLDSKKETSSCQDPVPINHKRRSLCSREVPLIQIETDQREACAGEPEPFLSKSSLLEEAEGHSNDKNIPDVVRGGDTAVSACQIHSDSLDTRDVPEAEASTEARAPDEAPNPPSSSEESTGSWTQLANEEDNPDDTSSFLQLSERSMSNGNSSATSSLGIMDLDIYQESMPSSPMINELVEEKKILKGQSESTEAPASGPPTGTASPQRSLLVINFDLEPECPDAELRATLQWIAASELGIPTIYFKKSQENRIEKFLDVVQLVHRKSWKVGDIFHAVVQYCKMHEEQKDGRLSLFDWLLELG.

Disordered stretches follow at residues 364 to 385 (SNLN…QDGE), 742 to 778 (IRRR…SNSH), and 793 to 885 (SKQD…NTQE). Low complexity predominate over residues 768–778 (SSSSSPLSNSH). The segment covering 822–831 (DSSTATTSSK) has biased composition (polar residues). The segment covering 839 to 855 (AGEDTKSPHHSENECRA) has biased composition (basic and acidic residues). Residues 857-873 (SEGQRSPTVSQSRSGSQ) show a composition bias toward polar residues. The interval 929–946 (FAEELADTVVSMATEIAA) is PKA-RII subunit binding domain. Residues 980 to 1006 (KRKKESQGSGTAVRKHKPPRLSEIKRK) form a disordered region. S1025, S1085, S1107, S1120, S1121, S1124, S1259, and S1288 each carry phosphoserine. Disordered stretches follow at residues 1374–1414 (DSVT…PVPI), 1481–1535 (IHSD…DTSS), and 1585–1604 (GQSE…TASP). Residues 1383–1398 (PVSSLSKTASLTNHSP) are compositionally biased toward polar residues. A compositionally biased stretch (polar residues) spans 1586 to 1604 (QSESTEAPASGPPTGTASP).

The protein belongs to the AKAP110 family. In terms of assembly, interacts (via the PKA-RII subunit binding domain) with the RI subunit of PKA. Interacts with SPHK1; the interaction greatly reduces SPHK1 activity. As to expression, highly expressed in heart. Both isoforms abundantly expressed in ventricle. Also expressed in spleen, ovary and brain.

Its subcellular location is the cytoplasm. Anchoring protein that binds preferentially to the type I regulatory subunit of c-AMP-dependent protein kinase (PKA type I) and targets it to distinct subcellular compartments. May act as a converging factor linking cAMP and sphingosine signaling pathways. Plays a regulatory role in the modulation of SPHK1. The chain is A-kinase anchor protein SPHKAP (SPHKAP) from Homo sapiens (Human).